The chain runs to 333 residues: MIDITLPLTDIHRHLDGNIRAQTILDLGRQFNIALPAQTLETLIPHVQVTSTEPDLVSFLTKLDWGVKVLASLDACRRVAFENIEDAARNGLHYVELRFSPGYMAMAHQLPIAGVVEAVIDGVRDGCNTFGVEARLIGIMSRTFGEAACLQELDALLAHREKITALDLAGDELGFPGSLFLSHFNRARDAGWHITVHAGEAAGPESIWQAIRELGAERIGHGVKAVEDRALMDFLAQQRIGIESCLTSNIQTSTVASLADHPLKTFLEHGVLASLNTDDPAVQGVDIIHEYHVAAPAAGLSREQIRQAQINGLEIAFLSDSEKRALREKVAAA.

Zn(2+) contacts are provided by H12 and H14. Substrate is bound by residues H14, D16, and G170. H197 serves as a coordination point for Zn(2+). E200 acts as the Proton donor in catalysis. D278 lines the Zn(2+) pocket. D279 lines the substrate pocket.

The protein belongs to the metallo-dependent hydrolases superfamily. Adenosine and AMP deaminases family. Adenosine deaminase subfamily. It depends on Zn(2+) as a cofactor.

The enzyme catalyses adenosine + H2O + H(+) = inosine + NH4(+). The catalysed reaction is 2'-deoxyadenosine + H2O + H(+) = 2'-deoxyinosine + NH4(+). Its function is as follows. Catalyzes the hydrolytic deamination of adenosine and 2-deoxyadenosine. This chain is Adenosine deaminase, found in Salmonella typhi.